The following is a 232-amino-acid chain: Acetate--CoA ligase [ADP-forming] I subunit beta (232 aa).

Residues 27 to 63 (KEILKLYGIPVPEFKVARNEEEAVKFSGEIGYPVVMK) form the ATP-grasp domain. Residue 53–64 (SGEIGYPVVMKI) participates in ATP binding.

This sequence belongs to the acetate CoA ligase beta subunit family. In terms of assembly, heterotetramer of two alpha and two beta subunits.

Its subcellular location is the cytoplasm. The catalysed reaction is acetate + ATP + CoA = acetyl-CoA + ADP + phosphate. Activity is dependent on magnesium. Functionally, catalyzes the reversible formation of acetate and ATP from acetyl-CoA by using ADP and phosphate. Can use other substrates such as isobutyryl-CoA, propionyl-CoA and butyryl-CoA, but not indoleacetyl-CoA, phenylacetyl-CoA or succinyl-CoA. Seems to be involved primarily in the conversion of acetyl-CoA to acetate. Participates in the degradation of branched-chain amino acids via branched-chain-acyl-CoA esters. The polypeptide is Acetate--CoA ligase [ADP-forming] I subunit beta (Pyrococcus furiosus (strain ATCC 43587 / DSM 3638 / JCM 8422 / Vc1)).